Consider the following 1647-residue polypeptide: Ras GTPase-activating-like protein IQG1 (1647 aa).

Residues 18-51 (DTTATTTTTTTSNVLQPSNRLNSPTKFNRKSLDN) form a disordered region. Over residues 19–28 (TTATTTTTTT) the composition is skewed to low complexity. Residues 29-43 (SNVLQPSNRLNSPTK) are compositionally biased toward polar residues. Position 48 is a phosphoserine (serine 48). Phosphothreonine occurs at positions 66, 72, and 82. A phosphoserine mark is found at serine 83, serine 91, and serine 139. The segment covering 143–162 (FNTQSNVHTPLKQLNQPIGT) has biased composition (polar residues). The disordered stretch occupies residues 143-175 (FNTQSNVHTPLKQLNQPIGTPSSSSLSPAKNAS). The span at 163-175 (PSSSSLSPAKNAS) shows a compositional bias: low complexity. Phosphoserine occurs at positions 165, 167, and 169. In terms of domain architecture, Calponin-homology (CH) spans 184 to 291 (LCRIEAIKQW…FCLHALSYIL (108 aa)). The segment at 326 to 427 (PLPNFSSADT…STSNAKLELH (102 aa)) is disordered. Over residues 342–355 (TSNNNSSTTSATAA) the composition is skewed to low complexity. Phosphothreonine is present on threonine 367. Positions 368-379 (PSPLKRPQQLQK) are enriched in low complexity. Serine 369 is subject to Phosphoserine. Composition is skewed to basic and acidic residues over residues 380–392 (KQLE…KPEL) and 402–413 (ISRDDPFTDRVD). 2 positions are modified to phosphoserine: serine 433 and serine 440. 9 consecutive IQ domains span residues 467–478 (FQSLARGAVFRY), 528–539 (LQSIIRKNFVIN), 556–567 (LQSLIRGKLTRD), 586–597 (FQSLVRMKSIYS), 616–627 (LQSIARSQLYHR), 642–653 (IQSIIRRNAVIE), 672–683 (LQSIARGGVART), 734–745 (VQTLFRGVLSRY), and 764–775 (LQSVARGKLMRG). A coiled-coil region spans residues 841–919 (LSDLKDLIIE…KKIELWQTLF (79 aa)). The region spanning 958-1223 (PVRDSSITYH…DTVKSIISQA (266 aa)) is the Ras-GAP domain. Phosphoserine occurs at positions 1064, 1068, 1088, 1383, and 1385.

Interacts with myosin MYO1 and its light chain MLC1. Interacts with BNI1. Interacts with BNR1. Interacts with CLB2. Interacts with CLB4. Interacts with CDC28. Hyperphosphorylated. Phosphorylation is cell cycle-dependent and peaks at the time of cytokinesis. Contains 21 consensus sites for cyclin-dependent kinases (CDKs). At least some of them are phosphorylated by the CLB2-CDC28 kinase complex. Mutation of 15 of the phosphorylation sites to Ala caused both premature assembly and delayed disassembly of the actomyosin ring, blocked interaction with the actin-nucleating proteins BNI1 and BNR1, and resulted in defects in cytokinesis.

Its subcellular location is the bud neck. Required for the assembly and the contraction of the actomyosin ring at the bud neck during cytokinesis. This is Ras GTPase-activating-like protein IQG1 (IQG1) from Candida albicans (strain SC5314 / ATCC MYA-2876) (Yeast).